We begin with the raw amino-acid sequence, 142 residues long: Metallothiol transferase FosB (142 aa).

One can recognise a VOC domain in the interval 5 to 120 (SVNHICFSVS…DGHKIELHTG (116 aa)). Mg(2+) contacts are provided by H8, H67, and E116. E116 functions as the Proton donor/acceptor in the catalytic mechanism.

Belongs to the fosfomycin resistance protein family. FosB subfamily. Homodimer. Mg(2+) is required as a cofactor.

The protein resides in the cytoplasm. Functionally, metallothiol transferase which confers resistance to fosfomycin by catalyzing the addition of a thiol cofactor to fosfomycin. L-cysteine is probably the physiological thiol donor. In Staphylococcus epidermidis (strain ATCC 12228 / FDA PCI 1200), this protein is Metallothiol transferase FosB.